A 161-amino-acid polypeptide reads, in one-letter code: Regulator of ribonuclease activity A (161 aa).

The protein belongs to the RraA family. Homotrimer. Binds to both RNA-binding sites in the C-terminal region of Rne and to RhlB.

Its subcellular location is the cytoplasm. In terms of biological role, globally modulates RNA abundance by binding to RNase E (Rne) and regulating its endonucleolytic activity. Can modulate Rne action in a substrate-dependent manner by altering the composition of the degradosome. Modulates RNA-binding and helicase activities of the degradosome. The polypeptide is Regulator of ribonuclease activity A (Salmonella agona (strain SL483)).